Here is a 257-residue protein sequence, read N- to C-terminus: uncharacterized protein (257 aa).

This is an uncharacterized protein from Dictyostelium discoideum (Social amoeba).